We begin with the raw amino-acid sequence, 154 residues long: Aspartate carbamoyltransferase regulatory chain (154 aa).

Zn(2+)-binding residues include Cys-109, Cys-114, Cys-138, and Cys-141.

It belongs to the PyrI family. As to quaternary structure, contains catalytic and regulatory chains. Requires Zn(2+) as cofactor.

In terms of biological role, involved in allosteric regulation of aspartate carbamoyltransferase. This Pectobacterium carotovorum subsp. carotovorum (strain PC1) protein is Aspartate carbamoyltransferase regulatory chain.